The sequence spans 262 residues: Indole-3-glycerol phosphate synthase (262 aa).

It belongs to the TrpC family.

It carries out the reaction 1-(2-carboxyphenylamino)-1-deoxy-D-ribulose 5-phosphate + H(+) = (1S,2R)-1-C-(indol-3-yl)glycerol 3-phosphate + CO2 + H2O. The protein operates within amino-acid biosynthesis; L-tryptophan biosynthesis; L-tryptophan from chorismate: step 4/5. The sequence is that of Indole-3-glycerol phosphate synthase from Leuconostoc mesenteroides subsp. mesenteroides (strain ATCC 8293 / DSM 20343 / BCRC 11652 / CCM 1803 / JCM 6124 / NCDO 523 / NBRC 100496 / NCIMB 8023 / NCTC 12954 / NRRL B-1118 / 37Y).